The following is a 140-amino-acid chain: Large ribosomal subunit protein uL16 (140 aa).

A compositionally biased stretch (basic residues) spans 1–16; it reads MLMPKRVKHRKQMKGR. A disordered region spans residues 1-20; that stretch reads MLMPKRVKHRKQMKGRMKGD.

It belongs to the universal ribosomal protein uL16 family. In terms of assembly, part of the 50S ribosomal subunit.

Its function is as follows. Binds 23S rRNA and is also seen to make contacts with the A and possibly P site tRNAs. This is Large ribosomal subunit protein uL16 from Geobacter sulfurreducens (strain ATCC 51573 / DSM 12127 / PCA).